The chain runs to 503 residues: Aromatase (503 aa).

Cysteine 437 lines the heme pocket.

Belongs to the cytochrome P450 family. It depends on heme as a cofactor.

The protein localises to the membrane. The catalysed reaction is testosterone + 3 reduced [NADPH--hemoprotein reductase] + 3 O2 = 17beta-estradiol + formate + 3 oxidized [NADPH--hemoprotein reductase] + 4 H2O + 4 H(+). It carries out the reaction androst-4-ene-3,17-dione + 3 reduced [NADPH--hemoprotein reductase] + 3 O2 = estrone + formate + 3 oxidized [NADPH--hemoprotein reductase] + 4 H2O + 4 H(+). In terms of biological role, catalyzes the formation of aromatic C18 estrogens from C19 androgens. The chain is Aromatase (CYP19A1) from Oryctolagus cuniculus (Rabbit).